Here is a 127-residue protein sequence, read N- to C-terminus: Aspartate 1-decarboxylase (127 aa).

Residue Ser25 is the Schiff-base intermediate with substrate; via pyruvic acid of the active site. Ser25 carries the post-translational modification Pyruvic acid (Ser). Residue Thr57 coordinates substrate. The active-site Proton donor is the Tyr58. 73–75 (GAA) is a binding site for substrate.

Belongs to the PanD family. In terms of assembly, heterooctamer of four alpha and four beta subunits. Pyruvate serves as cofactor. Post-translationally, is synthesized initially as an inactive proenzyme, which is activated by self-cleavage at a specific serine bond to produce a beta-subunit with a hydroxyl group at its C-terminus and an alpha-subunit with a pyruvoyl group at its N-terminus.

Its subcellular location is the cytoplasm. It carries out the reaction L-aspartate + H(+) = beta-alanine + CO2. The protein operates within cofactor biosynthesis; (R)-pantothenate biosynthesis; beta-alanine from L-aspartate: step 1/1. Its function is as follows. Catalyzes the pyruvoyl-dependent decarboxylation of aspartate to produce beta-alanine. The protein is Aspartate 1-decarboxylase of Neisseria meningitidis serogroup C / serotype 2a (strain ATCC 700532 / DSM 15464 / FAM18).